Here is a 405-residue protein sequence, read N- to C-terminus: Protein PAG1 (405 aa).

Positions 1–50 are cleaved as a signal peptide; it reads MVSLIILFRLTFAIANRVRTLMKVLVIVSFFVLTGSASADSGALSLSGAA. N-linked (GlcNAc...) asparagine glycans are attached at residues Asn-55, Asn-104, Asn-256, and Asn-351. Residue Ala-391 is the site of GPI-anchor amidated alanine attachment. The propeptide at 392–405 is removed in mature form; sequence DSLRRTLALLFLLF.

The protein localises to the cell membrane. In Trypanosoma brucei brucei, this protein is Protein PAG1 (PAG1).